The primary structure comprises 207 residues: MPKVIGLTGGIASGKSTVSELLSVFGFKVVDADKAAREAVKKGSKGLAQVREVFGDEAIDENGEMNRRYMGDLVFNHPEKRLELNAIIHPIVRDIMEEEKQEYLKQGYNVIMDIPLLFENELENTVDEVWVIYTSESIQMDRLMQRNNLSLEDAKARVYSQISIDKKSRMADHVIDNLGDKLELKQNLERLLKEEGYIEKPNYGEED.

The 200-residue stretch at 4–203 folds into the DPCK domain; sequence VIGLTGGIAS…EEGYIEKPNY (200 aa). 12–17 serves as a coordination point for ATP; that stretch reads ASGKST.

Belongs to the CoaE family.

The protein localises to the cytoplasm. It catalyses the reaction 3'-dephospho-CoA + ATP = ADP + CoA + H(+). It participates in cofactor biosynthesis; coenzyme A biosynthesis; CoA from (R)-pantothenate: step 5/5. Its function is as follows. Catalyzes the phosphorylation of the 3'-hydroxyl group of dephosphocoenzyme A to form coenzyme A. The protein is Dephospho-CoA kinase of Staphylococcus aureus (strain bovine RF122 / ET3-1).